The primary structure comprises 669 residues: p135Gag-Myb-Ets-transforming protein (669 aa).

The span at 1–10 (NSTMRRKVEQ) shows a compositional bias: basic and acidic residues. Disordered regions lie at residues 1–27 (NSTM…SATT) and 132–153 (TQNH…NTMT). The transcriptional activation domain stretch occupies residues 90-142 (PAAAAIQRHYNDEDPEKEKRIKELELLLMSTENELKGQQALPTQNHTANYPGW). Residues 276 to 361 (ATFSGFAKEQ…EHLEILQKEE (86 aa)) enclose the PNT domain. Residues 556–640 (GSGPIQLWQF…AGKRYVYRFV (85 aa)) constitute a DNA-binding region (ETS).

Its subcellular location is the host nucleus. In terms of biological role, DNA-binding protein that specifically recognizes the sequence 5'-YAAC[GT]G-3'. The Myb-Ets protein induces predominantly erythroblastosis in chicken and transforms avian erythroblasts and immature myelomonocytic cells in culture. It appears that the Ets domain is responsible for the effects on erythroid cells and that the Myb domain encodes the myeloid-transforming capacity. This chain is p135Gag-Myb-Ets-transforming protein (GAG), found in Avian leukemia virus E26.